The following is a 134-amino-acid chain: uncharacterized protein (134 aa).

A run of 2 helical transmembrane segments spans residues 49–69 and 71–91; these read VAVPAVLVLAPFWLIPTSLDV and LSMTLPILIPFVYFSHALNKV.

It localises to the cell membrane. This is an uncharacterized protein from Mycobacterium tuberculosis (strain ATCC 25618 / H37Rv).